Consider the following 563-residue polypeptide: Arginine--tRNA ligase (563 aa).

Residues 121–131 carry the 'HIGH' region motif; sequence PNIAKPFSIGH.

It belongs to the class-I aminoacyl-tRNA synthetase family. Monomer.

The protein resides in the cytoplasm. The catalysed reaction is tRNA(Arg) + L-arginine + ATP = L-arginyl-tRNA(Arg) + AMP + diphosphate. The polypeptide is Arginine--tRNA ligase (Streptococcus pyogenes serotype M3 (strain ATCC BAA-595 / MGAS315)).